Here is a 359-residue protein sequence, read N- to C-terminus: MAQPKRFQINAKHYFLTFPKCSLSKEEALEQLLQLQTPTNKKYIKICRELHEDGQPHLHMLIQFEGKFNCKNNRFFDLVSPTRSAHFHPNIQGAKSSSDVKSYIDKDGDVLEWGTFQIDGRSARGGQQTANDAYAKAINAGRKSEALDVIKELAPRDYILHFHNINSNLNMVFQVPPAPYVSPFLSSSFDQVPDELEHWVSENVMDVAARPWRPVSIVIEGDSRTGKTMWARSLGPHNYLCGHLDLSQKVYSNNAWYNVIDDVDPHYLKHFKEFMGSQRDWQSNTKYGKPIQIKGGIPTIFLCNPGPQSSFKEYLDEEKNQTLKNWAIKNAIFVTIHQPLFTNTNQDPTPHRQEETSEA.

In terms of domain architecture, CRESS-DNA virus Rep endonuclease spans glutamine 8–phenylalanine 116. Residues phenylalanine 15–phenylalanine 18 carry the RCR-1 motif. Glutamate 49, histidine 57, and histidine 59 together coordinate a divalent metal cation. Residues histidine 57–histidine 59 carry the RCR-2 motif. Tyrosine 103 acts as the For DNA cleavage activity in catalysis. The RCR-3 signature appears at tyrosine 103–lysine 106. Residue aspartate 107 coordinates a divalent metal cation. Residues lysine 143–leucine 153 form a binding to RBR1 region. Residues arginine 156–proline 176 form an oligomerization region. Glycine 221–threonine 228 is an ATP binding site.

The protein belongs to the geminiviridae Rep protein family. As to quaternary structure, homooligomer. Interacts with the replication enhancer protein (REn). Interacts with host retinoblastoma-related protein 1 (RBR1), and may thereby induce the transcription of host replicative enzymes even if the cell is not dividing anymore. Interacts with host PCNA. Interacts with host SCE1 protein. It depends on Mg(2+) as a cofactor. The cofactor is Mn(2+).

Its subcellular location is the host nucleus. Its function is as follows. Essential for the replication of viral ssDNA. The closed circular ssDNA genome is first converted to a superhelical dsDNA. Rep binds a specific region at the genome origin of replication. It introduces an endonucleolytic nick within the conserved sequence 5'-TAATATTAC-3' in the intergenic region of the genome present in all geminiviruses, thereby initiating the rolling circle replication (RCR). Following cleavage, binds covalently to the 5'-phosphate of DNA as a tyrosyl ester. The cleavage gives rise to a free 3'-OH that serves as a primer for the cellular DNA polymerase. The polymerase synthesizes the (+) strand DNA by rolling circle mechanism. After one round of replication, a Rep-catalyzed nucleotidyl transfer reaction releases a circular single-stranded virus genome, thereby terminating the replication. Displays origin-specific DNA cleavage, nucleotidyl transferase, ATPase and helicase activities. This is Replication-associated protein from Solanum lycopersicum (Tomato).